Reading from the N-terminus, the 764-residue chain is Kinesin-like protein KIN-14N (764 aa).

The tract at residues 1-50 (MSTRATRPGMLHQKENAADAQAGKRQRTAAGSAARAPLSANAAPPAPDPA) is disordered. Low complexity predominate over residues 29–50 (AAGSAARAPLSANAAPPAPDPA). Positions 105 to 416 (AEIGKLNGLL…RLHNTILELK (312 aa)) form a coiled coil. Residues 418–747 (NIRVFCRVRP…LRFAARVNSC (330 aa)) form the Kinesin motor domain. 498–505 (GQTGSGKT) serves as a coordination point for ATP.

Belongs to the TRAFAC class myosin-kinesin ATPase superfamily. Kinesin family. KIN-14 subfamily.

The polypeptide is Kinesin-like protein KIN-14N (Oryza sativa subsp. japonica (Rice)).